We begin with the raw amino-acid sequence, 120 residues long: Large ribosomal subunit protein uL18 (120 aa).

Residues 1 to 26 are disordered; that stretch reads MKLTRRESKQRRHRRVRGKVQGSPER. The segment covering 8 to 18 has biased composition (basic residues); the sequence is SKQRRHRRVRG.

The protein belongs to the universal ribosomal protein uL18 family. Part of the 50S ribosomal subunit; part of the 5S rRNA/L5/L18/L25 subcomplex. Contacts the 5S and 23S rRNAs.

Functionally, this is one of the proteins that bind and probably mediate the attachment of the 5S RNA into the large ribosomal subunit, where it forms part of the central protuberance. The polypeptide is Large ribosomal subunit protein uL18 (Trichormus variabilis (strain ATCC 29413 / PCC 7937) (Anabaena variabilis)).